The chain runs to 454 residues: Glutamyl-tRNA reductase (454 aa).

Substrate is bound by residues 49-52, Ser-109, 114-116, and Gln-120; these read TCNR and ETQ. Cys-50 serves as the catalytic Nucleophile. NADP(+) is bound at residue 189 to 194; the sequence is GAGKMG.

It belongs to the glutamyl-tRNA reductase family. In terms of assembly, homodimer.

The enzyme catalyses (S)-4-amino-5-oxopentanoate + tRNA(Glu) + NADP(+) = L-glutamyl-tRNA(Glu) + NADPH + H(+). Its pathway is porphyrin-containing compound metabolism; protoporphyrin-IX biosynthesis; 5-aminolevulinate from L-glutamyl-tRNA(Glu): step 1/2. Its function is as follows. Catalyzes the NADPH-dependent reduction of glutamyl-tRNA(Glu) to glutamate 1-semialdehyde (GSA). This chain is Glutamyl-tRNA reductase, found in Geobacillus kaustophilus (strain HTA426).